The chain runs to 102 residues: NADH-quinone oxidoreductase subunit K (102 aa).

A run of 3 helical transmembrane segments spans residues 5–25 (ITHY…GIFL), 31–51 (IIIL…FVAF), and 66–86 (FILT…VVFF).

Belongs to the complex I subunit 4L family. In terms of assembly, NDH-1 is composed of 14 different subunits. Subunits NuoA, H, J, K, L, M, N constitute the membrane sector of the complex.

The protein localises to the cell inner membrane. The enzyme catalyses a quinone + NADH + 5 H(+)(in) = a quinol + NAD(+) + 4 H(+)(out). Functionally, NDH-1 shuttles electrons from NADH, via FMN and iron-sulfur (Fe-S) centers, to quinones in the respiratory chain. The immediate electron acceptor for the enzyme in this species is believed to be ubiquinone. Couples the redox reaction to proton translocation (for every two electrons transferred, four hydrogen ions are translocated across the cytoplasmic membrane), and thus conserves the redox energy in a proton gradient. The protein is NADH-quinone oxidoreductase subunit K of Bartonella quintana (strain Toulouse) (Rochalimaea quintana).